We begin with the raw amino-acid sequence, 1179 residues long: Dynein axonemal assembly factor 9 (1179 aa).

As to quaternary structure, interacts with ARL3.

In terms of biological role, may act as an effector for ARL3. This is Dynein axonemal assembly factor 9 from Mus musculus (Mouse).